Reading from the N-terminus, the 434-residue chain is uncharacterized protein (434 aa).

The next 5 membrane-spanning stretches (helical) occupy residues Ile-27 to Ile-47, Phe-64 to Trp-84, Ile-244 to Leu-264, Val-289 to Leu-309, and Leu-387 to Phe-407.

It belongs to the CbiQ family.

Its subcellular location is the cell membrane. This is an uncharacterized protein from Mycoplasma pneumoniae (strain ATCC 29342 / M129 / Subtype 1) (Mycoplasmoides pneumoniae).